A 408-amino-acid polypeptide reads, in one-letter code: CCA-adding enzyme (408 aa).

ATP-binding residues include Gly-8 and Arg-11. Residues Gly-8 and Arg-11 each coordinate CTP. Residues Glu-21 and Asp-23 each coordinate Mg(2+). Residues Arg-91, Arg-137, and Arg-140 each coordinate ATP. Arg-91, Arg-137, and Arg-140 together coordinate CTP. Residues 226–329 form the HD domain; the sequence is TGYYTMTTLS…MTLFHVFDCW (104 aa).

This sequence belongs to the tRNA nucleotidyltransferase/poly(A) polymerase family. Bacterial CCA-adding enzyme type 2 subfamily. Mg(2+) serves as cofactor.

It carries out the reaction a tRNA precursor + 2 CTP + ATP = a tRNA with a 3' CCA end + 3 diphosphate. The enzyme catalyses a tRNA with a 3' CCA end + 2 CTP + ATP = a tRNA with a 3' CCACCA end + 3 diphosphate. Its function is as follows. Catalyzes the addition and repair of the essential 3'-terminal CCA sequence in tRNAs without using a nucleic acid template. Adds these three nucleotides in the order of C, C, and A to the tRNA nucleotide-73, using CTP and ATP as substrates and producing inorganic pyrophosphate. tRNA 3'-terminal CCA addition is required both for tRNA processing and repair. Also involved in tRNA surveillance by mediating tandem CCA addition to generate a CCACCA at the 3' terminus of unstable tRNAs. While stable tRNAs receive only 3'-terminal CCA, unstable tRNAs are marked with CCACCA and rapidly degraded. The chain is CCA-adding enzyme from Blochmanniella pennsylvanica (strain BPEN).